Reading from the N-terminus, the 143-residue chain is ATP synthase epsilon chain (143 aa).

It belongs to the ATPase epsilon chain family. As to quaternary structure, F-type ATPases have 2 components, CF(1) - the catalytic core - and CF(0) - the membrane proton channel. CF(1) has five subunits: alpha(3), beta(3), gamma(1), delta(1), epsilon(1). CF(0) has three main subunits: a, b and c.

The protein resides in the cell membrane. In terms of biological role, produces ATP from ADP in the presence of a proton gradient across the membrane. The polypeptide is ATP synthase epsilon chain (Lacticaseibacillus casei (strain BL23) (Lactobacillus casei)).